The primary structure comprises 347 residues: 4-hydroxy-2-oxovalerate aldolase (347 aa).

Positions 2–252 (ILISDATLRD…DTRTTFERVM (251 aa)) constitute a Pyruvate carboxyltransferase domain. 10-11 (RD) contacts substrate. D11 contacts Mn(2+). H14 functions as the Proton acceptor in the catalytic mechanism. Substrate is bound by residues S164 and H191. The Mn(2+) site is built by H191 and H193.

The protein belongs to the 4-hydroxy-2-oxovalerate aldolase family.

It catalyses the reaction (S)-4-hydroxy-2-oxopentanoate = acetaldehyde + pyruvate. This Burkholderia pseudomallei (strain 1710b) protein is 4-hydroxy-2-oxovalerate aldolase (mhpE).